We begin with the raw amino-acid sequence, 360 residues long: Phosphoserine aminotransferase (360 aa).

R41 serves as a coordination point for L-glutamate. W101, T152, D172, and Q195 together coordinate pyridoxal 5'-phosphate. K196 is modified (N6-(pyridoxal phosphate)lysine). Residue 237–238 (NT) participates in pyridoxal 5'-phosphate binding.

It belongs to the class-V pyridoxal-phosphate-dependent aminotransferase family. SerC subfamily. Homodimer. Pyridoxal 5'-phosphate is required as a cofactor.

It localises to the cytoplasm. It catalyses the reaction O-phospho-L-serine + 2-oxoglutarate = 3-phosphooxypyruvate + L-glutamate. The enzyme catalyses 4-(phosphooxy)-L-threonine + 2-oxoglutarate = (R)-3-hydroxy-2-oxo-4-phosphooxybutanoate + L-glutamate. It participates in amino-acid biosynthesis; L-serine biosynthesis; L-serine from 3-phospho-D-glycerate: step 2/3. The protein operates within cofactor biosynthesis; pyridoxine 5'-phosphate biosynthesis; pyridoxine 5'-phosphate from D-erythrose 4-phosphate: step 3/5. In terms of biological role, catalyzes the reversible conversion of 3-phosphohydroxypyruvate to phosphoserine and of 3-hydroxy-2-oxo-4-phosphonooxybutanoate to phosphohydroxythreonine. The chain is Phosphoserine aminotransferase from Paraburkholderia phytofirmans (strain DSM 17436 / LMG 22146 / PsJN) (Burkholderia phytofirmans).